Here is a 114-residue protein sequence, read N- to C-terminus: MAAIPSSGSLVATHDYYRRRLGSTSSNSSCSSTECPGEAIPHPPGLPKADPGHWWASFFFGKSTLPFMATVLESAEHSEPPQASSSMTACGLARDAPRKQPGGQSSTASAGPPS.

Phosphoserine is present on serine 9. Disordered stretches follow at residues 22 to 47 (GSTSSNSSCSSTECPGEAIPHPPGLP) and 75 to 114 (AEHSEPPQASSSMTACGLARDAPRKQPGGQSSTASAGPPS). The span at 23-33 (STSSNSSCSST) shows a compositional bias: low complexity. The span at 102-114 (GGQSSTASAGPPS) shows a compositional bias: polar residues.

The protein belongs to the PPDPF family.

Probable regulator of exocrine pancreas development. The sequence is that of Pancreatic progenitor cell differentiation and proliferation factor (PPDPF) from Homo sapiens (Human).